Reading from the N-terminus, the 344-residue chain is Meiotic recombination protein DMC1 homolog A (344 aa).

Residue 133–140 (GEFRSGKT) coordinates ATP. A dsDNA-binding site is contributed by R235. SsDNA-binding residues include R235, F238, R241, R247, and R315. DsDNA contacts are provided by R241 and R247.

The protein belongs to the RecA family. DMC1 subfamily. In terms of tissue distribution, expressed in meiotic young panicles.

The protein resides in the nucleus. Its function is as follows. Recombinase that may participate in meiotic recombination, specifically in homologous strand assimilation, which is required for the resolution of meiotic double-strand breaks. Exhibits DNA-dependent ATPase activity when bound to single-stranded DNA (ssDNA). Mediates renaturation of homologous complementary strands as well as assimilation of single strands into homologous supercoiled duplexes leading to D-loop formation. Binds circular single-stranded DNA (ssDNA) and circular double-stranded DNA (dsDNA) in vitro. Catalyzes DNA homologous renaturation and DNA strand exchange. The rates of these activities are dependent on the state of ATP hydrolysis. Forms helical filaments along ssDNA and dsDNA, and promotes strand exchange between ssDNA and dsDNA with long DNA substrates of several thousand base pairs. The presence of the replication protein A is not required for this activity. Seems to be required for homologous pairing and subsequent chromosome segregation during male meiosis. May be not directly required for homologous pairing during male meiosis. Required for synaptonemal complex assembly and crossover formation. Functions redundantly with DMC1B. This Oryza sativa subsp. japonica (Rice) protein is Meiotic recombination protein DMC1 homolog A.